A 564-amino-acid polypeptide reads, in one-letter code: ATP-dependent RNA helicase DBP3 (564 aa).

The disordered stretch occupies residues 31-125 (TKQQTMSKDK…TNYTQSSKLS (95 aa)). Over residues 58-73 (ADSKKQRKLEKQEKKD) the composition is skewed to basic and acidic residues. Over residues 74 to 96 (KKDKKDKKEKKEKKEKKHKKEKK) the composition is skewed to basic residues. Low complexity predominate over residues 112–125 (SSSSTNYTQSSKLS). Residues 155 to 181 (LSFDQVQLTSAITSKLSKFDKPTPIQS) carry the Q motif motif. Residues 184–356 (WPFLLSGKDV…NNFMNSPVKV (173 aa)) form the Helicase ATP-binding domain. 197-204 (AETGSGKT) contacts ATP. Residues 303–306 (DEAD) carry the DEAD box motif. The 150-residue stretch at 385 to 534 (KLIQLLRKYN…PVPEELLKFG (150 aa)) folds into the Helicase C-terminal domain.

It belongs to the DEAD box helicase family. DDX5/DBP2 subfamily.

It is found in the nucleus. It localises to the nucleolus. It carries out the reaction ATP + H2O = ADP + phosphate + H(+). Its function is as follows. ATP-dependent RNA helicase required for 60S ribosomal subunit synthesis. Involved in efficient pre-rRNA processing, predominantly at site A3, which is necessary for the normal formation of 25S and 5.8S rRNAs. This chain is ATP-dependent RNA helicase DBP3 (DBP3), found in Candida albicans (strain SC5314 / ATCC MYA-2876) (Yeast).